The primary structure comprises 1064 residues: MKSRFSTVDLRAVLAELNASLLGMRVNNVYDVDNKTYLIRLQKPDFKATLLLESGIRIHTTEFEWPKNMMPSSFAMKCRKHLKSRRLVSAKQLGVDRIVDFQFGSDEAAYHLIIELYDRGNIVLTDYEYLILNILRFRTDEADDVKFAVRERYPIDHARAAEPLLTLERLTEVIAAAPKGEVLKRVLNPLLPYGPALIEHCLIESGFSGNAKVDEKLESKDIEKILVCVQRAEDYLRKTSNFNGKGYIIQKREAKPSLDADKPAEDILTYEEFHPFLFSQHLQCPYIEFESFDKAVDEFYSKIEGQKIDLKALQQEKQALKKLDNVRKDHENRLEALQQAQEIDKLKGELIEMNLQIVDRAIQVVRSALANQIDWTEIGVIVKEAQAQGDPVACAIKELKLQTNHVTMLLRNPYLLSEEEDGDGDASIENSDAEAPKGKKKKQKNKQLQKPQKNKPLLVDVDLSLSAYANAKKYYDHKRYAAKKTQRTVEAAEKAFKSAEKKTKQTLKEVQTVTSIQKARKVYWFEKFLWFISSENYLIIGGRDQQQNEIIVKRYLTPGDIYVHADLHGATSCVIKNPTGEPIPPRTLTEAGTMALCYSAAWDARVITSAWWVYHHQVSKTAPTGEYLTTGSFMIRGKKNFLPPSYLMMGFSFLFKVDESCVWRHRGERKVRVQDEDMETLTSCTSELMAEEMEQLEGGDSSEEETEELHGMPGDVELMTQVDQEDIAVHSGRDELSSEDGEAKAVTKDQEPIGEMKEEEEDTFEYPDTTIDLSHLQSQRPLQKLAPREESLNSNDSKSQGRRHLSAKERREMKKKKLPCESGDLEVIEEKDKERESAVHTEAYQNTSKNVAAGQPMKRGQKSKMKKMKEKYKDQDDEDRELIMKLLASAGSNKEEKGKKGKKGKPKDEPVKKPPQKPRGGQRVLDVVKEPPSLQVLAHDLQDLAVDDPHDDKEEHDLDQQGNEENLFDSLTGQPHPEDVLMFAIPICAPYTIMTNYKYKVKLTPGVQKKGKAAKTALNSFMHSKEATAREKDLFRSVKDTDLSRNIPGKVKVSAPNLLHVKRK.

Thr7 carries the phosphothreonine modification. Positions 296-359 form a coiled coil; sequence VDEFYSKIEG…LIEMNLQIVD (64 aa). Ser417 is subject to Phosphoserine. The interval 420–451 is disordered; it reads EDGDGDASIENSDAEAPKGKKKKQKNKQLQKP. The segment covering 438-447 has biased composition (basic residues); sequence GKKKKQKNKQ. The stretch at 481 to 512 forms a coiled coil; it reads AAKKTQRTVEAAEKAFKSAEKKTKQTLKEVQT. Acidic residues predominate over residues 694 to 707; it reads EQLEGGDSSEEETE. Disordered stretches follow at residues 694 to 718 and 731 to 973; these read EQLEGGDSSEEETEELHGMPGDVEL and SGRD…SLTG. The segment covering 731–756 has biased composition (basic and acidic residues); it reads SGRDELSSEDGEAKAVTKDQEPIGEM. Ser737 is subject to Phosphoserine. Residues 771-781 show a composition bias toward polar residues; the sequence is IDLSHLQSQRP. Over residues 828 to 839 the composition is skewed to basic and acidic residues; the sequence is IEEKDKERESAV. Positions 858-882 form a coiled coil; that stretch reads KRGQKSKMKKMKEKYKDQDDEDREL. Positions 859-870 are enriched in basic residues; sequence RGQKSKMKKMKE. The segment covering 947 to 959 has biased composition (basic and acidic residues); that stretch reads DDPHDDKEEHDLD. A compositionally biased stretch (polar residues) spans 960–973; it reads QQGNEENLFDSLTG.

It belongs to the NEMF family. In terms of assembly, component of the ribosome quality control complex (RQC), composed of the E3 ubiquitin ligase LTN1, TCF25 and NEMF associated with the 60S ribosomal subunit. The complex probably also contains VCP/p97 and its ubiquitin-binding cofactors. Interacts (via its N-terminus) with XPO1.

It localises to the cytoplasm. The protein resides in the cytosol. It is found in the nucleus. Functionally, key component of the ribosome quality control complex (RQC), a ribosome-associated complex that mediates the extraction of incompletely synthesized nascent chains from stalled ribosomes as well as their ubiquitin-mediated proteasomal degradation. Thereby, frees 60S subunit ribosomes from the stalled translation complex and prevents the accumulation of nascent polypeptide chains that are potentially toxic for the cell. Within the RQC complex, NEMF specifically binds stalled 60S ribosomal subunits by recognizing an exposed, nascent chain-conjugated tRNA moiety and promotes the recruitment of LTN1 to stalled 60S subunits. Following binding to stalled 60S ribosomal subunits, NEMF mediates CAT tailing by recruiting alanine-charged tRNA to the A-site and directing the elongation of stalled nascent chains independently of mRNA or 40S subunits, leading to non-templated C-terminal alanine extensions (CAT tails). Mainly recruits alanine-charged tRNAs, but can also other amino acid-charged tRNAs. CAT tailing is required to promote ubiquitination of stalled nascent chains by different E3 ubiquitin-protein ligases. In the canonical RQC pathway (RQC-L), CAT tailing facilitates LTN1-dependent ubiquitination by exposing lysine residues that would otherwise remain buried in the ribosomal exit tunnel. In the alternative RQC pathway (RQC-C) CAT tailing creates an C-degron mainly composed of alanine that is recognized by the CRL2(KLHDC10) and RCHY1/PIRH2 E3 ligases, leading to ubiquitination and degradation of stalled nascent chains. NEMF may also indirectly play a role in nuclear export. The sequence is that of Ribosome quality control complex subunit NEMF from Mus musculus (Mouse).